The primary structure comprises 154 residues: Ribonuclease HI (154 aa).

The RNase H type-1 domain occupies 1-142; that stretch reads MQKQIEIFTD…CDQLAKAGAE (142 aa). Mg(2+) contacts are provided by D10, E48, D70, and D134.

It belongs to the RNase H family. In terms of assembly, monomer. The cofactor is Mg(2+).

Its subcellular location is the cytoplasm. It catalyses the reaction Endonucleolytic cleavage to 5'-phosphomonoester.. In terms of biological role, endonuclease that specifically degrades the RNA of RNA-DNA hybrids. The chain is Ribonuclease HI (rnhA) from Pasteurella multocida (strain Pm70).